The sequence spans 1548 residues: UDP-glucose:glycoprotein glucosyltransferase (1548 aa).

Positions 1-22 are cleaved as a signal peptide; sequence MLRAVALCVSVVLIALYTPTSG. Residue Asn181 is glycosylated (N-linked (GlcNAc...) asparagine). Residues 243–253 show a composition bias toward basic and acidic residues; the sequence is TEYKSQDDAPK. Residues 243 to 265 form a disordered region; it reads TEYKSQDDAPKPEAGSTSDEDLA. 2 N-linked (GlcNAc...) asparagine glycosylation sites follow: Asn266 and Asn864. The tract at residues 1227 to 1548 is glucosyltransferase; sequence SANQAATDED…PSHEPKHGEL (322 aa). Over residues 1512 to 1523 the composition is skewed to basic and acidic residues; that stretch reads EDHENSHSRDSA. The tract at residues 1512 to 1548 is disordered; the sequence is EDHENSHSRDSAVDDSVDDSVEVTTVTPSHEPKHGEL. The Prevents secretion from ER motif lies at 1545–1548; that stretch reads HGEL.

Belongs to the glycosyltransferase 8 family. In terms of assembly, monomer. May interact with CG7484/Sep15. The cofactor is Ca(2+). It depends on Mn(2+) as a cofactor.

The protein resides in the endoplasmic reticulum lumen. The protein localises to the endoplasmic reticulum-Golgi intermediate compartment. It carries out the reaction N(4)-(alpha-D-Man-(1-&gt;2)-alpha-D-Man-(1-&gt;2)-alpha-D-Man-(1-&gt;3)-[alpha-D-Man-(1-&gt;2)-alpha-D-Man-(1-&gt;3)-[alpha-D-Man-(1-&gt;2)-alpha-D-Man-(1-&gt;6)]-alpha-D-Man-(1-&gt;6)]-beta-D-Man-(1-&gt;4)-beta-D-GlcNAc-(1-&gt;4)-beta-D-GlcNAc)-L-asparaginyl-[protein] (N-glucan mannose isomer 9A1,2,3B1,2,3) + UDP-alpha-D-glucose = N(4)-(alpha-D-Glc-(1-&gt;3)-alpha-D-Man-(1-&gt;2)-alpha-D-Man-(1-&gt;2)-alpha-D-Man-(1-&gt;3)-[alpha-D-Man-(1-&gt;2)-alpha-D-Man-(1-&gt;3)-[alpha-D-Man-(1-&gt;2)-alpha-D-Man-(1-&gt;6)]-alpha-D-Man-(1-&gt;6)]-beta-D-Man-(1-&gt;4)-beta-D-GlcNAc-(1-&gt;4)-beta-D-GlcNAc)-L-asparaginyl-[protein] + UDP + H(+). Its pathway is protein modification; protein glycosylation. Functionally, recognizes glycoproteins with minor folding defects. Reglucosylates single N-glycans near the misfolded part of the protein, thus providing quality control for protein folding in the endoplasmic reticulum. Reglucosylated proteins are recognized by calreticulin for recycling to the endoplasmic reticulum and refolding or degradation. The polypeptide is UDP-glucose:glycoprotein glucosyltransferase (Drosophila melanogaster (Fruit fly)).